Here is a 76-residue protein sequence, read N- to C-terminus: Paralithocin 3 (76 aa).

An N-terminal signal peptide occupies residues 1–23 (MGPMKVLLVMLVVMVAAPHIADA). 4 disulfides stabilise this stretch: cysteine 31–cysteine 62, cysteine 40–cysteine 58, cysteine 44–cysteine 56, and cysteine 49–cysteine 59. At proline 74 the chain carries Proline amide; partial.

The protein belongs to the paralithocin family. The amidated form is probably the active form.

Has antibacterial activity, mainly against marine Gram-positive bacteria like C.maltaromaticum (MIC=25 uM), C.mobile (MIC=12.5 uM), C.divergens (MIC=25 uM) and C.funditum (MIC=12.5 uM) but also against C.glutamicum (MIC=12.5 uM). Has very little or no activity against Gram-negative bacteria. The protein is Paralithocin 3 of Paralithodes camtschaticus (Red king crab).